We begin with the raw amino-acid sequence, 261 residues long: tRNA U34 carboxymethyltransferase (261 aa).

Carboxy-S-adenosyl-L-methionine-binding positions include K25, W39, K44, G63, 114-115, Y135, and R250; that span reads VE.

Belongs to the class I-like SAM-binding methyltransferase superfamily. CmoB family. As to quaternary structure, homotetramer.

It catalyses the reaction carboxy-S-adenosyl-L-methionine + 5-hydroxyuridine(34) in tRNA = 5-carboxymethoxyuridine(34) in tRNA + S-adenosyl-L-homocysteine + H(+). Functionally, catalyzes carboxymethyl transfer from carboxy-S-adenosyl-L-methionine (Cx-SAM) to 5-hydroxyuridine (ho5U) to form 5-carboxymethoxyuridine (cmo5U) at position 34 in tRNAs. This Helicobacter pylori (strain ATCC 700392 / 26695) (Campylobacter pylori) protein is tRNA U34 carboxymethyltransferase.